Here is a 400-residue protein sequence, read N- to C-terminus: Elongation factor Tu (400 aa).

Residues 10–208 (KPHLNVGTIG…TMDEYFPEPQ (199 aa)) form the tr-type G domain. Residues 19–26 (GHIDHGKT) are G1. Residue 19–26 (GHIDHGKT) participates in GTP binding. Threonine 26 provides a ligand contact to Mg(2+). Residues 60–64 (GITIN) form a G2 region. Positions 81-84 (DCPG) are G3. GTP-binding positions include 81-85 (DCPGH) and 136-139 (NKTD). The segment at 136–139 (NKTD) is G4. Residues 174–176 (SAL) form a G5 region.

Belongs to the TRAFAC class translation factor GTPase superfamily. Classic translation factor GTPase family. EF-Tu/EF-1A subfamily. As to quaternary structure, monomer.

It localises to the cytoplasm. The catalysed reaction is GTP + H2O = GDP + phosphate + H(+). GTP hydrolase that promotes the GTP-dependent binding of aminoacyl-tRNA to the A-site of ribosomes during protein biosynthesis. This chain is Elongation factor Tu, found in Thermosipho melanesiensis (strain DSM 12029 / CIP 104789 / BI429).